Reading from the N-terminus, the 332-residue chain is T-cell surface glycoprotein CD1b2 (332 aa).

Residues 1-17 (MLLLVLALLAVLFPAGD) form the signal peptide. Over 18–301 (TQDAFPEPIS…ILYWGNSSIG (284 aa)) the chain is Extracellular. N-linked (GlcNAc...) asparagine glycans are attached at residues asparagine 38, asparagine 75, and asparagine 146. 3 disulfides stabilise this stretch: cysteine 120–cysteine 184, cysteine 149–cysteine 163, and cysteine 224–cysteine 279. Residues 185–295 (PRYLMSVLEA…LGGQDIILYW (111 aa)) enclose the Ig-like domain. Asparagine 297 is a glycosylation site (N-linked (GlcNAc...) asparagine). The chain crosses the membrane as a helical span at residues 302-322 (WIILAVFVSCLIVLLFYVLWF). At 323–332 (YKHWSYQDIL) the chain is on the cytoplasmic side. The Internalization signal signature appears at 328-331 (YQDI).

As to quaternary structure, heterodimer with B2M (beta-2-microglobulin). Interacts with saposin C.

It is found in the cell membrane. The protein resides in the endosome membrane. Its subcellular location is the lysosome membrane. Functionally, antigen-presenting protein that binds self and non-self lipid and glycolipid antigens and presents them to T-cell receptors on natural killer T-cells. The protein is T-cell surface glycoprotein CD1b2 (CD1B2) of Cavia porcellus (Guinea pig).